The primary structure comprises 286 residues: uncharacterized protein (286 aa).

Disordered stretches follow at residues 1–38 (MSQKKKASLSKIHTGMNSSSKQVLSSTSSANEKTEDDV), 108–146 (HTGELSNNGAERGKIRGSTRATRKGSVNKSKSGRTRRHK), 196–227 (RTQKSSSEEGEGEFSGRGDPAPLEVGDSKTRL), and 241–286 (DVDD…PRSS). The segment covering 18-29 (SSSKQVLSSTSS) has biased composition (low complexity). Residues 243 to 268 (DDQKKDGSGEEKKEKKSAEKEKKISH) show a composition bias toward basic and acidic residues. The segment covering 269–278 (ENVQSLSPSS) has biased composition (polar residues).

This is an uncharacterized protein from Caenorhabditis elegans.